The chain runs to 1951 residues: [F-actin]-monooxygenase MICAL2 (1951 aa).

Positions 2–494 (GENEDEKQAQ…KHLYITKEMD (493 aa)) are monooxygenase domain. FAD-binding positions include Cys97, 116–118 (EKR), 123–125 (RNN), Phe183, Tyr298, and Asp398. The Calponin-homology (CH) domain maps to 516–619 (DIRPNKLLTW…MVMYLSKFYE (104 aa)). Ser631 is modified (phosphoserine). The Nuclear localization signal signature appears at 660-681 (RKRTPRVDTQTEENDMNKRRRQ). Disordered regions lie at residues 663 to 712 (TPRV…SQNK) and 891 to 921 (KRVP…AADS). The span at 691-700 (SFSSRSLGSS) shows a compositional bias: low complexity. Positions 896–909 (AHPPSPPSCLPSPH) are enriched in pro residues. The span at 910 to 921 (PAAASSPPAADS) shows a compositional bias: low complexity. An LIM zinc-binding domain is found at 991-1053 (DTCYFCKKRV…KPHFVHCKTS (63 aa)). Cys993, Cys996, His1014, Cys1017, Cys1020, Cys1023, Cys1043, and His1046 together coordinate Zn(2+). At Thr1052 the chain carries Phosphoserine. Disordered stretches follow at residues 1054–1141 (SKQR…RISP), 1158–1314 (TSED…VSPT), 1348–1368 (VEPG…EGCQ), 1383–1427 (ILGK…RKLG), 1451–1476 (HKTG…TCSS), 1489–1580 (QKKA…AKKA), 1594–1624 (AQAS…STTP), 1678–1697 (GDFF…VPSL), 1706–1731 (STSM…GEGG), and 1747–1766 (PVTE…EADS). The segment covering 1061-1070 (AELNQQREEE) has biased composition (basic and acidic residues). Composition is skewed to polar residues over residues 1129–1138 (PRPSEWTSVR), 1228–1239 (HSLQSPTPSKYQ), and 1246–1256 (QSNSTPMNQRA). Residues 1257-1268 (PSPPKEPPPPPS) are compositionally biased toward pro residues. The span at 1269 to 1285 (LSSSSSLPSSFSSASVP) shows a compositional bias: low complexity. Residues 1291 to 1306 (DSSSPQVTYNLHSPQI) show a composition bias toward polar residues. The interaction with MAPK1 stretch occupies residues 1314-1353 (TPIYLRRARAQGIVKEIPLYLPHSPMLESTEDCLVEPGRE). Basic and acidic residues predominate over residues 1350–1359 (PGRESLRSPE). The span at 1532–1545 (EAGKKTSPKPESKT) shows a compositional bias: basic and acidic residues. Over residues 1599–1616 (LSLPNSILRSRSLPSRPS) the composition is skewed to low complexity. The span at 1678–1688 (GDFFNSPKEEG) shows a compositional bias: basic and acidic residues. Ser1683 carries the post-translational modification Phosphoserine. The segment covering 1706–1720 (STSMGQVAHPSSTGQ) has biased composition (polar residues). Residues 1749 to 1759 (TEATSSPTSSS) show a composition bias toward low complexity. Positions 1789 to 1939 (KQEELKRLHK…ERTQDQHFEN (151 aa)) constitute a bMERB domain.

The protein belongs to the Mical family. As to quaternary structure, interacts with PLXNA4. Interacts with RAB1B. Interacts with MAPK1/ERK2. Interacts with RAB1B, RAB35, RAB8A, RAB10, RAB13 and RAB15 (in their GTP-bound forms); binding to RAB1B and RAB35 is of low affinity compared to other Rab proteins; binding to RAB1B and RAB35 is of low affinity compared to other Rab proteins; at least in case of RAB8A may bind 2 molecules of RAB8A simultaneously through a high and a low affinity binding site, respectively. It depends on FAD as a cofactor. Expressed only in testis (at protein level).

It localises to the cytoplasm. The protein resides in the nucleus. It carries out the reaction L-methionyl-[F-actin] + NADPH + O2 + H(+) = L-methionyl-(R)-S-oxide-[F-actin] + NADP(+) + H2O. Its function is as follows. Methionine monooxygenase that promotes depolymerization of F-actin by mediating oxidation of residues 'Met-44' and 'Met-47' on actin to form methionine-sulfoxide, resulting in actin filament disassembly and preventing repolymerization. Regulates the disassembly of branched actin networks also by oxidizing ARP3B-containing ARP2/3 complexes leading to ARP3B dissociation from the network. Acts as a key regulator of the SRF signaling pathway elicited by nerve growth factor and serum: mediates oxidation and subsequent depolymerization of nuclear actin, leading to increase MKL1/MRTF-A presence in the nucleus and promote SRF:MKL1/MRTF-A-dependent gene transcription. Does not activate SRF:MKL1/MRTF-A through RhoA. The polypeptide is [F-actin]-monooxygenase MICAL2 (Mus musculus (Mouse)).